The following is a 243-amino-acid chain: CD48 antigen (243 aa).

An N-terminal signal peptide occupies residues 1–26; that stretch reads MCSRGWDSCLALELLLLPLSLLVTSI. Ig-like C2-type domains are found at residues 29–127 and 132–212; these read HLVH…KLQV and PKPV…VCLS. N-linked (GlcNAc...) asparagine glycans are attached at residues asparagine 40, asparagine 44, asparagine 104, asparagine 162, and asparagine 189. Residues cysteine 154 and cysteine 196 are joined by a disulfide bond. A lipid anchor (GPI-anchor amidated serine) is attached at serine 220. A propeptide spans 221 to 243 (removed in mature form); it reads FGVEWIASWLVVTVPTILGLLLT.

Interacts with CD2. Interacts with CD244; this interaction is possible not only on different cells (trans interaction) but also on the same cell (cis interaction). Interacts with LCK. In terms of tissue distribution, widely expressed on all hematopoietic cells.

The protein localises to the cell membrane. It is found in the membrane raft. Its subcellular location is the secreted. In terms of biological role, glycosylphosphatidylinositol (GPI)-anchored cell surface glycoprotein that interacts via its N-terminal immunoglobulin domain with cell surface receptors including CD244/2B4 or CD2 to regulate immune cell function and activation. Participates in T-cell signaling transduction by associating with CD2 and efficiently bringing the Src family protein kinase LCK and LAT to the TCR/CD3 complex. In turn, promotes LCK phosphorylation and subsequent activation. Induces the phosphorylation of the cytoplasmic immunoreceptortyrosine switch motifs (ITSMs) of CD244 initiating a series of signaling events that leads to the generation of the immunological synapse and the directed release of cytolytic granules containing perforin and granzymes by T-lymphocytes and NK-cells. The sequence is that of CD48 antigen (CD48) from Homo sapiens (Human).